Reading from the N-terminus, the 807-residue chain is Centrosomal protein of 97 kDa (807 aa).

LRR repeat units lie at residues 34-55 (DTQTLILDKNQIIKLEHVEKCR), 56-77 (NLVQLSVANNRLVRMMGVAKLI), 78-99 (HLRVLNLPHNSIGYVEGLKDLV), 100-121 (HLEWINLAGNNLKIIDQINSST), 122-143 (SLQHLDLSDNNISQIGDLSKLK), 144-165 (SLKTLLLHGNNIASLRAASACL), and 168-189 (SLTILSLAENEIRDLNEVAFLA). An LRRCT domain is found at 208–246 (TPSIPGFDYRPFIVSWCLNLKVLDGYVVSQKESLKAEWL). The segment at 306–330 (RSDGYLTSSTPNKRLPLSTEHHSPT) is disordered. The 30-residue stretch at 519-548 (ISKAATKLQSCWRGFYARKYNPKVKDVCYE) folds into the IQ domain. Residues 607–623 (TANSSENDLPSASNSKH) show a composition bias toward polar residues. The interval 607–756 (TANSSENDLP…RPEITTCSDN (150 aa)) is disordered. The segment covering 681 to 690 (TGRHYNDKVP) has biased composition (basic and acidic residues). The span at 704–724 (SQSSKDSFTSEQDSSLLQQYL) shows a compositional bias: polar residues.

It is found in the cytoplasm. Its subcellular location is the cytoskeleton. The protein resides in the microtubule organizing center. It localises to the centrosome. Functionally, acts as a key negative regulator of ciliogenesis in collaboration with ccp110 by capping the mother centriole thereby preventing cilia formation. Required for recruitment of ccp110 to the centrosome. The sequence is that of Centrosomal protein of 97 kDa (cep97) from Xenopus laevis (African clawed frog).